Here is a 213-residue protein sequence, read N- to C-terminus: Large ribosomal subunit protein uL1 (213 aa).

It belongs to the universal ribosomal protein uL1 family. As to quaternary structure, part of the 50S ribosomal subunit.

Functionally, binds directly to 23S rRNA. Probably involved in E site tRNA release. In terms of biological role, protein L1 is also a translational repressor protein, it controls the translation of its operon by binding to its mRNA. The sequence is that of Large ribosomal subunit protein uL1 from Methanoculleus marisnigri (strain ATCC 35101 / DSM 1498 / JR1).